Here is a 377-residue protein sequence, read N- to C-terminus: UPF0754 membrane protein LMOf2365_2257 (377 aa).

Transmembrane regions (helical) follow at residues 1–21 and 357–377; these read MSVL…GAMT and YLGG…AMWI.

Belongs to the UPF0754 family.

It localises to the cell membrane. In Listeria monocytogenes serotype 4b (strain F2365), this protein is UPF0754 membrane protein LMOf2365_2257.